The sequence spans 165 residues: MEPCRSLALLTSSLGLVSLLVAVSTNFWFAARGPGFSSHSGLWPSKDQVSVAGYIHVTQSFCILAVLWGLISTAFLVMSCIPSLSAPGRGPIVSTFMGFAGALSLIVAMTVYTIERWNQPANPQVQSFFSWSFYLGWVSTLLFLCTGGLSLGAHCTTHRPDYEAV.

Helical transmembrane passes span L9 to F29, F61 to I81, I92 to Y112, and F133 to A153.

This sequence belongs to the PMP-22/EMP/MP20 family.

Its subcellular location is the cell membrane. The protein localises to the cytolytic granule membrane. Functionally, regulates cytotoxic granule exocytosis in effector lymphocytes, thus acting as a critical mediator of inflammation in a broad range of infectious and non-infectious diseases. Essential for cytotoxic degranulation of natural killer (NK) cells and CD8(+) T-cells and for the activation of CD4(+) T-cells following infection. Plays a critical role in CD8(+) T-cell and NK cell-mediated cytolysis of target cells and contributes to the cytolytic activity via the perforin/granzyme pathway by enhancing exocytosis of LAMP1-carrying lytic granules. Contributes to NK cell-mediated control of cancer metastasis. This chain is Protein NKG7 (NKG7), found in Bos taurus (Bovine).